Consider the following 419-residue polypeptide: eIF5-mimic protein 1 (419 aa).

Residues 1–22 (MNKHQKPVLTGQRFKTRKRDEK) are disordered. Lysine 117 bears the N6-acetyllysine mark. The region spanning 248-415 (VQQSLGTRKE…QNAEEESESE (168 aa)) is the W2 domain. A phosphoserine mark is found at serine 412 and serine 414.

The protein belongs to the BZW family. Interacts with EIF3E. Interacts with EIF2S2. Interacts with EIF3C.

Its subcellular location is the cytoplasm. Its function is as follows. Translation initiation regulator which represses non-AUG initiated translation and repeat-associated non-AUG (RAN) initiated translation by acting as a competitive inhibitor of eukaryotic translation initiation factor 5 (EIF5) function. Increases the accuracy of translation initiation by impeding EIF5-dependent translation from non-AUG codons by competing with it for interaction with EIF2S2 within the 43S pre-initiation complex (PIC) in an EIF3C-binding dependent manner. The chain is eIF5-mimic protein 1 (BZW2) from Homo sapiens (Human).